The chain runs to 269 residues: Growth-regulating factor 11 (269 aa).

Residues 1-11 show a composition bias toward basic and acidic residues; it reads MAAEGEAKKDS. The tract at residues 1–71 is disordered; the sequence is MAAEGEAKKD…GKEDVEEGGV (71 aa). Residues 43-52 show a composition bias toward gly residues; the sequence is GEAGGGGGGG. Acidic residues predominate over residues 58 to 68; it reads EEEEGKEDVEE. The 36-residue stretch at 114 to 149 folds into the QLQ domain; sequence AFTAMQLQELEQQSRVYQYMAARVPVPTHLVFPIWK. Residues 180–224 enclose the WRC domain; it reads EPEPGRCRRTDGKKWRCWRNAIANEKYCERHMHRGRKRPVQLVVE. 2 short sequence motifs (bipartite nuclear localization signal) span residues 185 to 195 and 213 to 217; these read RCRRTDGKKWR and RGRKR. The segment at 212–269 is disordered; the sequence is HRGRKRPVQLVVEDDEPDSTSGSKPASGKATEGGKKTDDKSSSSKKLAVAAPAAVEST. A compositionally biased stretch (basic and acidic residues) spans 243-253; sequence EGGKKTDDKSS. Low complexity predominate over residues 255–269; that stretch reads SKKLAVAAPAAVEST.

Belongs to the GRF family.

The protein localises to the nucleus. Functionally, transcription activator that plays a regulatory role in gibberellin-induced stem elongation. This is Growth-regulating factor 11 (GRF11) from Oryza sativa subsp. japonica (Rice).